Here is a 279-residue protein sequence, read N- to C-terminus: Ribosomal RNA small subunit methyltransferase J (279 aa).

Residues 138 to 139 (ER) and D194 each bind S-adenosyl-L-methionine.

The protein belongs to the methyltransferase superfamily. RsmJ family.

The protein localises to the cytoplasm. The catalysed reaction is guanosine(1516) in 16S rRNA + S-adenosyl-L-methionine = N(2)-methylguanosine(1516) in 16S rRNA + S-adenosyl-L-homocysteine + H(+). Its function is as follows. Specifically methylates the guanosine in position 1516 of 16S rRNA. The protein is Ribosomal RNA small subunit methyltransferase J of Acinetobacter baumannii (strain ATCC 17978 / DSM 105126 / CIP 53.77 / LMG 1025 / NCDC KC755 / 5377).